A 412-amino-acid polypeptide reads, in one-letter code: Peptidase T (412 aa).

Position 78 (H78) interacts with Zn(2+). D80 is an active-site residue. Position 140 (D140) interacts with Zn(2+). E173 (proton acceptor) is an active-site residue. The Zn(2+) site is built by E174, D196, and H379.

This sequence belongs to the peptidase M20B family. Zn(2+) serves as cofactor.

Its subcellular location is the cytoplasm. The catalysed reaction is Release of the N-terminal residue from a tripeptide.. In terms of biological role, cleaves the N-terminal amino acid of tripeptides. The protein is Peptidase T of Edwardsiella ictaluri (strain 93-146).